A 559-amino-acid polypeptide reads, in one-letter code: Germacrene A synthase (559 aa).

The Mg(2+) site is built by Asp-312, Asp-316, Asp-456, Thr-460, and Glu-464. The short motif at 312 to 316 is the DDXXD motif element; it reads DDTYD.

This sequence belongs to the terpene synthase family. As to quaternary structure, monomer. The cofactor is Mg(2+). In terms of tissue distribution, expressed in glandular trichomes of all aerial tissues, with highest levels in tissues accumulating parthenolide (e.g. flowers and, to some extent, leaves).

It catalyses the reaction (2E,6E)-farnesyl diphosphate = (+)-(R)-germacrene A + diphosphate. The protein operates within secondary metabolite biosynthesis; terpenoid biosynthesis. Its function is as follows. Sesquiterpene synthase involved in germacrene A biosynthesis. Germacrene A is a precursor of several sesquiterpene lactones. This chain is Germacrene A synthase, found in Tanacetum parthenium (Feverfew).